Reading from the N-terminus, the 307-residue chain is Nitrogenase iron protein 2 (307 aa).

Residue 13–20 (GKGGIGKS) coordinates ATP. Residue Cys101 coordinates [4Fe-4S] cluster. Arg104 is modified (ADP-ribosylarginine; by dinitrogenase reductase ADP-ribosyltransferase). Cys135 contributes to the [4Fe-4S] cluster binding site. The tract at residues 285–307 (QLTETDKAAKESEKKQEDAEGEA) is disordered.

This sequence belongs to the NifH/BchL/ChlL family. Homodimer. [4Fe-4S] cluster serves as cofactor. Post-translationally, the reversible ADP-ribosylation of Arg-104 inactivates the nitrogenase reductase and regulates nitrogenase activity.

The catalysed reaction is N2 + 8 reduced [2Fe-2S]-[ferredoxin] + 16 ATP + 16 H2O = H2 + 8 oxidized [2Fe-2S]-[ferredoxin] + 2 NH4(+) + 16 ADP + 16 phosphate + 6 H(+). Functionally, the key enzymatic reactions in nitrogen fixation are catalyzed by the nitrogenase complex, which has 2 components: the iron protein and the molybdenum-iron protein. The chain is Nitrogenase iron protein 2 (nifH2) from Mastigocladus laminosus (Fischerella sp.).